Reading from the N-terminus, the 839-residue chain is Katanin p80 WD40 repeat-containing subunit B1 homolog KTN80.3 (839 aa).

WD repeat units follow at residues 14-54, 57-96, 99-138, 141-182, 184-222, 225-265, and 267-304; these read AHSA…AILS, GHSS…VVRT, GHRS…CIHT, GHTR…HEFK, HEGK…LIGS, TETT…DGVD, and GWSN…TEPM. The short motif at 115 to 131 is the DWD box element; the sequence is FFASGSLDTNLKIWDIR. Disordered regions lie at residues 303–340, 357–435, 501–561, and 575–648; these read PMSG…LGKL, GKLS…KSAS, LQSK…RTNK, and SLVR…PSNM. Composition is skewed to polar residues over residues 307–334, 375–385, 411–435, 501–533, 589–602, and 630–648; these read GATQ…NSSK, TGRSSVSQSSD, TLSS…KSAS, LQSK…QSQP, DLIS…SSPT, and VSSS…PSNM.

It belongs to the WD repeat KATNB1 family. As to quaternary structure, component of KTN80-KTN1 complexes composed of a hexamer of KTN1-KTN80 heterodimers that sense microtubule (MT) geometry to confer precise MT severing. Interacts directly with AAA1/KTN1 and KTN80.1, and weakly with KTN80.4. Expressed in siliques, flowers, leaves, stems and roots.

It localises to the cytoplasm. It is found in the cytoskeleton. Functionally, may participate in a complex which severs microtubules in an ATP-dependent manner. Microtubule severing may promote rapid reorganization of cellular microtubule arrays. Confers precision to microtubule (MT) severing by specific targeting of KTN1 to MT cleavage sites such as crossover or branching nucleation sites. Together with other KTN80s, regulates cell elongation by modulating MT organization. The polypeptide is Katanin p80 WD40 repeat-containing subunit B1 homolog KTN80.3 (Arabidopsis thaliana (Mouse-ear cress)).